Here is a 469-residue protein sequence, read N- to C-terminus: Serine/threonine-protein kinase orb6 (469 aa).

The Protein kinase domain maps to Phe93 to Phe392. ATP-binding positions include Ile99–Val107 and Lys122. Catalysis depends on Asp216, which acts as the Proton acceptor. Residues Thr393–Gly467 form the AGC-kinase C-terminal domain.

It belongs to the protein kinase superfamily. Ser/Thr protein kinase family. In terms of assembly, interacts with mob2.

The enzyme catalyses L-seryl-[protein] + ATP = O-phospho-L-seryl-[protein] + ADP + H(+). It catalyses the reaction L-threonyl-[protein] + ATP = O-phospho-L-threonyl-[protein] + ADP + H(+). In terms of biological role, interacts with pak1/shk1 and coordinates cell morphogenesis with the cell cycle. It is essential for maintenance of cell polarity and is involved in mitotic control. This chain is Serine/threonine-protein kinase orb6 (orb6), found in Schizosaccharomyces pombe (strain 972 / ATCC 24843) (Fission yeast).